Consider the following 180-residue polypeptide: Shikimate kinase (180 aa).

14–19 is an ATP binding site; that stretch reads GAGKST. Mg(2+) is bound at residue Ser18. Substrate contacts are provided by Asp36, Arg60, and Gly82. Arg120 serves as a coordination point for ATP. Arg139 contributes to the substrate binding site.

It belongs to the shikimate kinase family. In terms of assembly, monomer. Mg(2+) is required as a cofactor.

The protein resides in the cytoplasm. The catalysed reaction is shikimate + ATP = 3-phosphoshikimate + ADP + H(+). The protein operates within metabolic intermediate biosynthesis; chorismate biosynthesis; chorismate from D-erythrose 4-phosphate and phosphoenolpyruvate: step 5/7. Its function is as follows. Catalyzes the specific phosphorylation of the 3-hydroxyl group of shikimic acid using ATP as a cosubstrate. This is Shikimate kinase from Chromohalobacter salexigens (strain ATCC BAA-138 / DSM 3043 / CIP 106854 / NCIMB 13768 / 1H11).